We begin with the raw amino-acid sequence, 165 residues long: Acireductone dioxygenase (165 aa).

Fe(2+) contacts are provided by His90, His92, Glu96, and His134. Residues His90, His92, Glu96, and His134 each coordinate Ni(2+).

Belongs to the acireductone dioxygenase (ARD) family. Monomer. Fe(2+) is required as a cofactor. Requires Ni(2+) as cofactor.

The enzyme catalyses 1,2-dihydroxy-5-(methylsulfanyl)pent-1-en-3-one + O2 = 3-(methylsulfanyl)propanoate + CO + formate + 2 H(+). The catalysed reaction is 1,2-dihydroxy-5-(methylsulfanyl)pent-1-en-3-one + O2 = 4-methylsulfanyl-2-oxobutanoate + formate + 2 H(+). The protein operates within amino-acid biosynthesis; L-methionine biosynthesis via salvage pathway; L-methionine from S-methyl-5-thio-alpha-D-ribose 1-phosphate: step 5/6. Catalyzes 2 different reactions between oxygen and the acireductone 1,2-dihydroxy-3-keto-5-methylthiopentene (DHK-MTPene) depending upon the metal bound in the active site. Fe-containing acireductone dioxygenase (Fe-ARD) produces formate and 2-keto-4-methylthiobutyrate (KMTB), the alpha-ketoacid precursor of methionine in the methionine recycle pathway. Ni-containing acireductone dioxygenase (Ni-ARD) produces methylthiopropionate, carbon monoxide and formate, and does not lie on the methionine recycle pathway. The polypeptide is Acireductone dioxygenase (Rhodopseudomonas palustris (strain TIE-1)).